We begin with the raw amino-acid sequence, 837 residues long: MSLLLSFYLLGLLVSSGQALLQVTISLSKVELSVGESKFFTCTAIGEPESIDWYNPQGEKIISTQRVVVQKEGVRSRLTIYNANIEDAGIYRCQATDAKGQTQEATVVLEIYQKLTFREVVSPQEFKQGEDAEVVCRVSSSPAPAVSWLYHNEEVTTISDNRFAMLANNNLQILNINKSDEGIYRCEGRVEARGEIDFRDIIVIVNVPPAISMPQKSFNATAERGEEMTFSCRASGSPEPAISWFRNGKLIEENEKYILKGSNTELTVRNIINSDGGPYVCRATNKAGEDEKQAFLQVFVQPHIIQLKNETTYENGQVTLVCDAEGEPIPEITWKRAVDGFTFTEGDKSLDGRIEVKGQHGSSSLHIKDVKLSDSGRYDCEAASRIGGHQKSMYLDIEYAPKFISNQTIYYSWEGNPINISCDVKSNPPASIHWRRDKLVLPAKNTTNLKTYSTGRKMILEIAPTSDNDFGRYNCTATNHIGTRFQEYILALADVPSSPYGVKIIELSQTTAKVSFNKPDSHGGVPIHHYQVDVKEVASEIWKIVRSHGVQTMVVLNNLEPNTTYEIRVAAVNGKGQGDYSKIEIFQTLPVREPSPPSIHGQPSSGKSFKLSITKQDDGGAPILEYIVKYRSKDKEDQWLEKKVQGNKDHIILEHLQWTMGYEVQITAANRLGYSEPTVYEFSMPPKPNIIKDTLFNGLGLGAVIGLGVAALLLILVVTDVSCFFIRQCGLLMCITRRMCGKKSGSSGKSKELEEGKAAYLKDGSKEPIVEMRTEDERVTNHEDGSPVNEPNETTPLTEPEKLPLKEEDGKEALNPETIEIKVSNDIIQSKEDDSKA.

The signal sequence occupies residues 1–19; sequence MSLLLSFYLLGLLVSSGQA. Over 20-697 the chain is Extracellular; that stretch reads LLQVTISLSK…PNIIKDTLFN (678 aa). Ig-like C2-type domains lie at 21 to 108, 113 to 202, 208 to 297, 302 to 396, and 401 to 491; these read LQVT…ATVV, QKLT…RDII, PPAI…AFLQ, PHII…MYLD, and PKFI…YILA. 2 disulfide bridges follow: Cys42-Cys93 and Cys136-Cys186. Residues Asn177 and Asn219 are each glycosylated (N-linked (GlcNAc...) asparagine). Cys232 and Cys281 are joined by a disulfide. An N-linked (GlcNAc...) asparagine glycan is attached at Asn309. Cys322 and Cys380 are oxidised to a cystine. N-linked (GlcNAc...) asparagine glycans are attached at residues Asn406, Asn419, Asn445, Asn474, and Asn562. Residues Cys422 and Cys475 are joined by a disulfide bond. 2 Fibronectin type-III domains span residues 498-591 and 593-688; these read SPYG…TLPV and EPSP…PPKP. Residues 698-718 form a helical membrane-spanning segment; the sequence is GLGLGAVIGLGVAALLLILVV. Residues 719-837 are Cytoplasmic-facing; it reads TDVSCFFIRQ…IQSKEDDSKA (119 aa). The span at 764-785 shows a compositional bias: basic and acidic residues; it reads GSKEPIVEMRTEDERVTNHEDG. Positions 764–818 are disordered; sequence GSKEPIVEMRTEDERVTNHEDGSPVNEPNETTPLTEPEKLPLKEEDGKEALNPET. Ser765 is modified (phosphoserine). Thr780 bears the Phosphothreonine mark. Ser786 is subject to Phosphoserine. Low complexity predominate over residues 789-798; it reads NEPNETTPLT. Over residues 799–814 the composition is skewed to basic and acidic residues; the sequence is EPEKLPLKEEDGKEAL.

In terms of tissue distribution, expressed most strongly in adult and fetal brain.

It localises to the cell membrane. Its function is as follows. May play important roles in selective fasciculation and zone-to-zone projection of the primary olfactory axons. This chain is Neural cell adhesion molecule 2 (NCAM2), found in Homo sapiens (Human).